A 167-amino-acid chain; its full sequence is NAD(P)H-quinone oxidoreductase subunit I, chloroplastic (167 aa).

4Fe-4S ferredoxin-type domains are found at residues 55-84 and 95-124; these read GRIH…VDWK and LNYS…MTEE. C64, C67, C70, C74, C104, C107, C110, and C114 together coordinate [4Fe-4S] cluster.

The protein belongs to the complex I 23 kDa subunit family. NDH is composed of at least 16 different subunits, 5 of which are encoded in the nucleus. The cofactor is [4Fe-4S] cluster.

The protein resides in the plastid. It localises to the chloroplast thylakoid membrane. The enzyme catalyses a plastoquinone + NADH + (n+1) H(+)(in) = a plastoquinol + NAD(+) + n H(+)(out). The catalysed reaction is a plastoquinone + NADPH + (n+1) H(+)(in) = a plastoquinol + NADP(+) + n H(+)(out). Functionally, NDH shuttles electrons from NAD(P)H:plastoquinone, via FMN and iron-sulfur (Fe-S) centers, to quinones in the photosynthetic chain and possibly in a chloroplast respiratory chain. The immediate electron acceptor for the enzyme in this species is believed to be plastoquinone. Couples the redox reaction to proton translocation, and thus conserves the redox energy in a proton gradient. This is NAD(P)H-quinone oxidoreductase subunit I, chloroplastic from Solanum tuberosum (Potato).